A 131-amino-acid chain; its full sequence is NADH dehydrogenase [ubiquinone] 1 alpha subcomplex subunit 6 (131 aa).

Belongs to the complex I LYR family. Mammalian complex I is composed of 45 different subunits.

It localises to the mitochondrion inner membrane. Accessory subunit of the mitochondrial membrane respiratory chain NADH dehydrogenase (Complex I), that is believed to be not involved in catalysis. Required for proper complex I assembly. Complex I functions in the transfer of electrons from NADH to the respiratory chain. The immediate electron acceptor for the enzyme is believed to be ubiquinone. This Mus musculus (Mouse) protein is NADH dehydrogenase [ubiquinone] 1 alpha subcomplex subunit 6.